A 256-amino-acid chain; its full sequence is Dihydroorotate dehydrogenase B (NAD(+)), electron transfer subunit (256 aa).

Residues 2-100 enclose the FAD-binding FR-type domain; that stretch reads IRLETMKVVA…MGPQGNGFDL (99 aa). FAD contacts are provided by residues 51 to 54, 68 to 70, and 75 to 76; these read RPIS, IYR, and GT. C220, C225, C228, and C243 together coordinate [2Fe-2S] cluster.

This sequence belongs to the PyrK family. Heterotetramer of 2 PyrK and 2 PyrD type B subunits. Requires [2Fe-2S] cluster as cofactor. The cofactor is FAD.

It participates in pyrimidine metabolism; UMP biosynthesis via de novo pathway; orotate from (S)-dihydroorotate (NAD(+) route): step 1/1. Its function is as follows. Responsible for channeling the electrons from the oxidation of dihydroorotate from the FMN redox center in the PyrD type B subunit to the ultimate electron acceptor NAD(+). This Streptococcus pneumoniae (strain ATCC BAA-255 / R6) protein is Dihydroorotate dehydrogenase B (NAD(+)), electron transfer subunit.